A 214-amino-acid polypeptide reads, in one-letter code: Large ribosomal subunit protein bL25 (214 aa).

Belongs to the bacterial ribosomal protein bL25 family. CTC subfamily. Part of the 50S ribosomal subunit; part of the 5S rRNA/L5/L18/L25 subcomplex. Contacts the 5S rRNA. Binds to the 5S rRNA independently of L5 and L18.

Its function is as follows. This is one of the proteins that binds to the 5S RNA in the ribosome where it forms part of the central protuberance. The chain is Large ribosomal subunit protein bL25 from Polynucleobacter necessarius subsp. necessarius (strain STIR1).